The following is a 256-amino-acid chain: MRILLTNDDGIHAEGLSVLERIALTISDDVWVVAPEVDQSGLAHSLTLSEPLRLRQVSERHFALRGTPTDCVIMAARKILDRKPDLVLSGVNIGANLADDVTYSGTVAGAIEGTLQGIRSIAVSQAYHHAVGGAVSWDVAETHAPALIRTLMNVELPDGTLLNVNFPNCAADAVAGVEVTSQGKLEFGLSIDERIDGRGYPYFWLRFGERYGDFRSGTDIHAVRENRISVTPLKLDLTDYTVQERIARALREGTGA.

A divalent metal cation-binding residues include D8, D9, S40, and N92.

The protein belongs to the SurE nucleotidase family. The cofactor is a divalent metal cation.

Its subcellular location is the cytoplasm. The catalysed reaction is a ribonucleoside 5'-phosphate + H2O = a ribonucleoside + phosphate. Functionally, nucleotidase that shows phosphatase activity on nucleoside 5'-monophosphates. This is 5'-nucleotidase SurE from Sinorhizobium fredii (strain NBRC 101917 / NGR234).